The sequence spans 181 residues: Peptide deformylase 1 (181 aa).

Cysteine 106 and histidine 148 together coordinate Fe cation. Residue glutamate 149 is part of the active site. Residue histidine 152 coordinates Fe cation.

This sequence belongs to the polypeptide deformylase family. Fe(2+) serves as cofactor.

It carries out the reaction N-terminal N-formyl-L-methionyl-[peptide] + H2O = N-terminal L-methionyl-[peptide] + formate. In terms of biological role, removes the formyl group from the N-terminal Met of newly synthesized proteins. Requires at least a dipeptide for an efficient rate of reaction. N-terminal L-methionine is a prerequisite for activity but the enzyme has broad specificity at other positions. In Burkholderia multivorans (strain ATCC 17616 / 249), this protein is Peptide deformylase 1.